The chain runs to 946 residues: DNA ligase 4 (946 aa).

Positions 295, 297, 302, 355, 397, 457, 462, 479, and 481 each coordinate ATP. The active-site N6-AMP-lysine intermediate is Lys297. Position 355 (Glu355) interacts with Mg(2+). Glu457 is a binding site for Mg(2+). BRCT domains lie at 688-787 and 845-945; these read HRSD…PSHC and VPHF…NYRL.

The protein belongs to the ATP-dependent DNA ligase family. The cofactor is Mg(2+).

Its subcellular location is the nucleus. It catalyses the reaction ATP + (deoxyribonucleotide)n-3'-hydroxyl + 5'-phospho-(deoxyribonucleotide)m = (deoxyribonucleotide)n+m + AMP + diphosphate.. Functionally, DNA ligase involved in DNA non-homologous end joining (NHEJ); required for double-strand break (DSB) repair. This chain is DNA ligase 4 (LIG4), found in Candida glabrata (strain ATCC 2001 / BCRC 20586 / JCM 3761 / NBRC 0622 / NRRL Y-65 / CBS 138) (Yeast).